The chain runs to 80 residues: D-alanyl carrier protein (80 aa).

Positions 1–77 constitute a Carrier domain; the sequence is MDIQKQIVDI…KLVEQVKKLQ (77 aa). Ser35 is subject to O-(pantetheine 4'-phosphoryl)serine.

This sequence belongs to the DltC family. Post-translationally, 4'-phosphopantetheine is transferred from CoA to a specific serine of apo-DCP.

Its subcellular location is the cytoplasm. The protein operates within cell wall biogenesis; lipoteichoic acid biosynthesis. Carrier protein involved in the D-alanylation of lipoteichoic acid (LTA). The loading of thioester-linked D-alanine onto DltC is catalyzed by D-alanine--D-alanyl carrier protein ligase DltA. The DltC-carried D-alanyl group is further transferred to cell membrane phosphatidylglycerol (PG) by forming an ester bond, probably catalyzed by DltD. D-alanylation of LTA plays an important role in modulating the properties of the cell wall in Gram-positive bacteria, influencing the net charge of the cell wall. The polypeptide is D-alanyl carrier protein (Lactobacillus delbrueckii subsp. bulgaricus (strain ATCC 11842 / DSM 20081 / BCRC 10696 / JCM 1002 / NBRC 13953 / NCIMB 11778 / NCTC 12712 / WDCM 00102 / Lb 14)).